A 206-amino-acid polypeptide reads, in one-letter code: Large ribosomal subunit protein uL4 (206 aa).

Residues 46–78 (GNRAQKDREQVKHTTKKPWRQKGTGRARAGMSS) form a disordered region. A compositionally biased stretch (basic residues) spans 58 to 70 (HTTKKPWRQKGTG).

It belongs to the universal ribosomal protein uL4 family. As to quaternary structure, part of the 50S ribosomal subunit.

Its function is as follows. One of the primary rRNA binding proteins, this protein initially binds near the 5'-end of the 23S rRNA. It is important during the early stages of 50S assembly. It makes multiple contacts with different domains of the 23S rRNA in the assembled 50S subunit and ribosome. Functionally, forms part of the polypeptide exit tunnel. The chain is Large ribosomal subunit protein uL4 from Burkholderia lata (strain ATCC 17760 / DSM 23089 / LMG 22485 / NCIMB 9086 / R18194 / 383).